We begin with the raw amino-acid sequence, 1072 residues long: Teashirt homolog 3 (1072 aa).

3 disordered regions span residues 44-71 (ACPS…SETS), 130-153 (PSSE…CGSG), and 228-247 (HYRD…WSKP). Positions 57–71 (SSHEMDSESHISETS) are enriched in basic and acidic residues. 2 C2H2-type zinc fingers span residues 204–228 (FRCK…ETGH) and 265–289 (LKCM…KTKH). Positions 228–237 (HYRDDNHETD) are enriched in basic and acidic residues. Positions 315-336 (SLELELPSSPDSTGGTPKATLS) are disordered. Residues 376–400 (LKCMECGSSHDTLQELTAHMMVTGH) form a C2H2-type 3; atypical zinc finger. Residues 469 to 481 (AVLDEKPKEKEKA) show a composition bias toward basic and acidic residues. Disordered regions lie at residues 469-489 (AVLD…EKYD), 569-594 (NSEI…PMPK), 616-690 (EKMK…PLSG), 784-815 (TKGK…TVTT), and 846-888 (TESH…RQSN). Polar residues-rich tracts occupy residues 571–593 (EIVS…SPMP) and 649–660 (SSGSGFKSQENS). Ser-672 bears the Phosphoserine mark. Low complexity-rich tracts occupy residues 791–815 (GCSL…TVTT) and 847–860 (ESHT…SSIS). A DNA-binding region (homeobox; atypical) is located at residues 882–952 (RKGRQSNWNP…NVKYQLRRTG (71 aa)). C2H2-type zinc fingers lie at residues 967-989 (FFCN…LESH) and 1032-1055 (YQCK…SKTH).

This sequence belongs to the teashirt C2H2-type zinc-finger protein family. In terms of assembly, interacts (via N-terminus) with HDAC1 and HDAC2; the interaction is direct. Found in a trimeric complex with APBB1 and HDAC1; the interaction between HDAC1 and APBB1 is mediated by TSHZ3. Interacts (via homeobox domain) with APBB1 (via PID domain 1). Expressed in cortical neurons.

The protein localises to the nucleus. It is found in the cell projection. The protein resides in the growth cone. Its function is as follows. Transcriptional regulator involved in developmental processes. Functions in association with APBB1, SET and HDAC factors as a transcriptional repressor, that inhibits the expression of CASP4. TSHZ3-mediated transcription repression involves the recruitment of histone deacetylases HDAC1 and HDAC2. Associates with chromatin in a region surrounding the CASP4 transcriptional start site(s). Regulates the development of neurons involved in both respiratory rhythm and airflow control. Promotes maintenance of nucleus ambiguus (nA) motoneurons, which govern upper airway function, and establishes a respiratory rhythm generator (RRG) activity compatible with survival at birth. Involved in the differentiation of the proximal uretic smooth muscle cells during developmental processes. Involved in the up-regulation of myocardin, that directs the expression of smooth muscle cells in the proximal ureter. Involved in the modulation of glutamatergic synaptic transmission and long-term synaptic potentiation. In Rattus norvegicus (Rat), this protein is Teashirt homolog 3 (Tshz3).